The sequence spans 559 residues: 2-succinyl-5-enolpyruvyl-6-hydroxy-3-cyclohexene-1-carboxylate synthase (559 aa).

Belongs to the TPP enzyme family. MenD subfamily. In terms of assembly, homodimer. Requires Mg(2+) as cofactor. Mn(2+) serves as cofactor. It depends on thiamine diphosphate as a cofactor.

The enzyme catalyses isochorismate + 2-oxoglutarate + H(+) = 5-enolpyruvoyl-6-hydroxy-2-succinyl-cyclohex-3-ene-1-carboxylate + CO2. The protein operates within quinol/quinone metabolism; 1,4-dihydroxy-2-naphthoate biosynthesis; 1,4-dihydroxy-2-naphthoate from chorismate: step 2/7. Its pathway is quinol/quinone metabolism; menaquinone biosynthesis. Its function is as follows. Catalyzes the thiamine diphosphate-dependent decarboxylation of 2-oxoglutarate and the subsequent addition of the resulting succinic semialdehyde-thiamine pyrophosphate anion to isochorismate to yield 2-succinyl-5-enolpyruvyl-6-hydroxy-3-cyclohexene-1-carboxylate (SEPHCHC). In Edwardsiella ictaluri (strain 93-146), this protein is 2-succinyl-5-enolpyruvyl-6-hydroxy-3-cyclohexene-1-carboxylate synthase.